The following is a 38-amino-acid chain: DFASCHTNGGICLPNRCPGHMIQIGICFRPRVKCCRSW.

Cystine bridges form between Cys-5/Cys-34, Cys-12/Cys-27, and Cys-17/Cys-35.

The protein belongs to the beta-defensin family. In terms of assembly, monomer. Homodimer. As to expression, neutrophilic granules.

The protein localises to the secreted. The protein resides in the membrane. Has bactericidal activity. Active against E.coli ML35 but not against S.aureus 502A. May act as a ligand for C-C chemokine receptor CCR6. Positively regulates the sperm motility and bactericidal activity in a CCR6-dependent manner. Binds to CCR6 and triggers Ca2+ mobilization in the sperm which is important for its motility. This is Beta-defensin 1 (DEFB1) from Bos taurus (Bovine).